We begin with the raw amino-acid sequence, 578 residues long: ATP-dependent RNA helicase CHR1 (578 aa).

A disordered region spans residues 1–95; the sequence is MDIFRILSRG…NETKAKEEEI (95 aa). Basic and acidic residues-rich tracts occupy residues 44-53 and 78-94; these read EVERETDFFH and NKEE…KEEE. The Q motif motif lies at 131–159; that stretch reads DMIGRFHINKKVLSNLIDNEFVEPTPIQC. The 178-residue stretch at 162–339 folds into the Helicase ATP-binding domain; the sequence is IPITLNNRDL…HSIMKDPLRI (178 aa). 175-182 is an ATP binding site; sequence APTGSGKT. A DEAD box motif is present at residues 286–289; it reads DEAD. Positions 350-514 constitute a Helicase C-terminal domain; sequence TIDQKLVFTG…GYSQWMEDMG (165 aa). Basic and acidic residues-rich tracts occupy residues 517–531 and 561–578; these read SKKE…EIQR and ESKQ…EREE. Residues 517–578 are disordered; it reads SKKEKKQIKT…ESHSNDEREE (62 aa).

It belongs to the DEAD box helicase family. DDX52/ROK1 subfamily. In terms of assembly, interacts with the U3 snoRNA and is associated with the 90S and 40S pre-ribosomes.

The protein localises to the nucleus. Its subcellular location is the nucleolus. It carries out the reaction ATP + H2O = ADP + phosphate + H(+). ATP-dependent RNA helicase involved in 40S ribosomal subunit biogenesis. Required for the processing and cleavage of 35S pre-rRNA at sites A0, A1, and A2, leading to mature 18S rRNA. This Candida albicans (strain SC5314 / ATCC MYA-2876) (Yeast) protein is ATP-dependent RNA helicase CHR1 (CHR1).